Here is a 164-residue protein sequence, read N- to C-terminus: MPAKAASAAASKKNSAPKSAVSKKVAKKGAPAAAAKPTKVVKVTKRKAYTRPQFRRPHTYRRPATVKPSSNVSAIKNKWDAFRIIRYPLTTDKAMKKIEENNTLTFIVDSRANKTEIKKAIRKLYQVKTVKVNTLIRPDGLKKAYIRLSASYDALDTANKMGLV.

The disordered stretch occupies residues 1–41 (MPAKAASAAASKKNSAPKSAVSKKVAKKGAPAAAAKPTKVV).

Belongs to the universal ribosomal protein uL23 family.

Its function is as follows. This protein binds to a specific region on the 26S rRNA. This is Large ribosomal subunit protein uL23 (RPL23A) from Trypanosoma brucei brucei.